The chain runs to 219 residues: MKAINIALDGPAAAGKSTIAKRVASELSMIYVDTGAMYRALTYKYLKLNKTEDFAKLVDQTTLDLTYKADKGQCVILDNEDVTDFLRNNDVTQHVSYVASKEPVRSFAVKKQKELAAEKGIVMDGRDIGTVVLPDADLKVYMIASVEERAERRYKDNQLRGIESNFEDLKRDIEARDQYDMNREISPLRKADDAVTLDTTGKSIEEVTDEILAMVSQIK.

Position 10 to 18 (10 to 18) interacts with ATP; the sequence is GPAAAGKST.

This sequence belongs to the cytidylate kinase family. Type 1 subfamily.

The protein localises to the cytoplasm. The catalysed reaction is CMP + ATP = CDP + ADP. The enzyme catalyses dCMP + ATP = dCDP + ADP. This is Cytidylate kinase from Staphylococcus aureus (strain JH9).